We begin with the raw amino-acid sequence, 129 residues long: Small ribosomal subunit protein uS11 (129 aa).

The disordered stretch occupies residues 108–129 (EDVTPIPHDGTKPKGGKRGRRV).

Belongs to the universal ribosomal protein uS11 family. In terms of assembly, part of the 30S ribosomal subunit.

In terms of biological role, located on the platform of the 30S subunit. This is Small ribosomal subunit protein uS11 from Methanothrix thermoacetophila (strain DSM 6194 / JCM 14653 / NBRC 101360 / PT) (Methanosaeta thermophila).